The chain runs to 350 residues: Protein RecA (350 aa).

Residue 68–75 participates in ATP binding; the sequence is GPESSGKT.

The protein belongs to the RecA family.

It is found in the cytoplasm. In terms of biological role, can catalyze the hydrolysis of ATP in the presence of single-stranded DNA, the ATP-dependent uptake of single-stranded DNA by duplex DNA, and the ATP-dependent hybridization of homologous single-stranded DNAs. It interacts with LexA causing its activation and leading to its autocatalytic cleavage. This Mycolicibacterium gilvum (strain PYR-GCK) (Mycobacterium gilvum (strain PYR-GCK)) protein is Protein RecA.